The following is a 398-amino-acid chain: Cytochrome b (398 aa).

4 helical membrane passes run Phe-38 to Met-58, Trp-82 to Phe-104, Val-119 to Val-139, and Phe-185 to Ala-205. His-88 and His-102 together coordinate heme b. Heme b contacts are provided by His-189 and His-203. His-208 is an a ubiquinone binding site. Helical transmembrane passes span Phe-231–Phe-251, Ala-295–Lys-315, Ile-327–Cys-347, and Phe-354–Pro-373.

Belongs to the cytochrome b family. The main subunits of complex b-c1 are: cytochrome b, cytochrome c1 and the Rieske protein. Heme b serves as cofactor.

It localises to the mitochondrion inner membrane. Its function is as follows. Component of the ubiquinol-cytochrome c reductase complex (complex III or cytochrome b-c1 complex) that is part of the mitochondrial respiratory chain. The b-c1 complex mediates electron transfer from ubiquinol to cytochrome c. Contributes to the generation of a proton gradient across the mitochondrial membrane that is then used for ATP synthesis. The polypeptide is Cytochrome b (MT-CYB) (Triticum aestivum (Wheat)).